Reading from the N-terminus, the 369-residue chain is MKRNILAVVIPALLVAGTANAAEIFNKDGNKLDLYGKVDVRHQFADKRSSEDGDDSYARIGIKGETQISDQLTGFGRWEYNVKAKGTEAAVAESSTRLAFAGLKFANYGSLDYGRNYGVNYDVNAWTDVLPIFGGDAMAQTDNFMTGRSTGLLTYRNTDFFGLVDGLNFALQYQGQNSDRTKNKGRDTERSNGDGYGLSSTYDVGYGITVGGSYANSARTADQKEKVSDAYGKRAEAWNIGAKYDANNVYLAAMYGETRNMTRYTRTIADTDATLIANKTQNIELTAQYLFSDLGLKPSLAYVQSKGKDLTEGKGFNGDLVKYVSVGTYYYFNKNLSTYVDYKINLLKKDNELGVNARNVFGVGLTYQF.

The N-terminal stretch at 1 to 21 (MKRNILAVVIPALLVAGTANA) is a signal peptide. Residues 22-27 (AEIFNK) form a beta stranded membrane-spanning segment. Asp28 is a topological domain (periplasmic). Residues 29–44 (GNKLDLYGKVDVRHQF) traverse the membrane as a beta stranded segment. The Extracellular segment spans residues 45 to 55 (ADKRSSEDGDD). The beta stranded transmembrane segment at 56–68 (SYARIGIKGETQI) threads the bilayer. At 69–70 (SD) the chain is on the periplasmic side. Residues 71–83 (QLTGFGRWEYNVK) traverse the membrane as a beta stranded segment. The Extracellular portion of the chain corresponds to 84-97 (AKGTEAAVAESSTR). A beta stranded transmembrane segment spans residues 98–106 (LAFAGLKFA). The Periplasmic segment spans residues 107–108 (NY). A beta stranded transmembrane segment spans residues 109 to 115 (GSLDYGR). The Extracellular segment spans residues 116-150 (NYGVNYDVNAWTDVLPIFGGDAMAQTDNFMTGRST). Residues 151 to 157 (GLLTYRN) form a beta stranded membrane-spanning segment. The Periplasmic portion of the chain corresponds to 158 to 165 (TDFFGLVD). A beta stranded membrane pass occupies residues 166–177 (GLNFALQYQGQN). Over 178-193 (SDRTKNKGRDTERSNG) the chain is Extracellular. A beta stranded membrane pass occupies residues 194–204 (DGYGLSSTYDV). At 205–206 (GY) the chain is on the periplasmic side. A beta stranded membrane pass occupies residues 207-219 (GITVGGSYANSAR). Residues 220-234 (TADQKEKVSDAYGKR) lie on the Extracellular side of the membrane. A beta stranded transmembrane segment spans residues 235–246 (AEAWNIGAKYDA). Residue Asn247 is a topological domain, periplasmic. A beta stranded transmembrane segment spans residues 248 to 259 (NVYLAAMYGETR). Residues 260 to 278 (NMTRYTRTIADTDATLIAN) lie on the Extracellular side of the membrane. Residues 279-291 (KTQNIELTAQYLF) traverse the membrane as a beta stranded segment. Residues 292-294 (SDL) are Periplasmic-facing. A beta stranded transmembrane segment spans residues 295 to 308 (GLKPSLAYVQSKGK). Residues 309–320 (DLTEGKGFNGDL) lie on the Extracellular side of the membrane. The beta stranded transmembrane segment at 321–332 (VKYVSVGTYYYF) threads the bilayer. The Periplasmic portion of the chain corresponds to 333-334 (NK). The chain crosses the membrane as a beta stranded span at residues 335–344 (NLSTYVDYKI). At 345-359 (NLLKKDNELGVNARN) the chain is on the extracellular side. The chain crosses the membrane as a beta stranded span at residues 360 to 369 (VFGVGLTYQF).

The protein belongs to the Gram-negative porin family. Homotrimer.

It is found in the cell outer membrane. Forms pores that allow passive diffusion of small molecules across the outer membrane. The polypeptide is Outer membrane porin F (ompF) (Xenorhabdus nematophila (strain ATCC 19061 / DSM 3370 / CCUG 14189 / LMG 1036 / NCIMB 9965 / AN6)).